A 447-amino-acid chain; its full sequence is Na(+)-translocating NADH-quinone reductase subunit A (447 aa).

Belongs to the NqrA family. As to quaternary structure, composed of six subunits; NqrA, NqrB, NqrC, NqrD, NqrE and NqrF.

It catalyses the reaction a ubiquinone + n Na(+)(in) + NADH + H(+) = a ubiquinol + n Na(+)(out) + NAD(+). Functionally, NQR complex catalyzes the reduction of ubiquinone-1 to ubiquinol by two successive reactions, coupled with the transport of Na(+) ions from the cytoplasm to the periplasm. NqrA to NqrE are probably involved in the second step, the conversion of ubisemiquinone to ubiquinol. In Neisseria gonorrhoeae (strain NCCP11945), this protein is Na(+)-translocating NADH-quinone reductase subunit A.